We begin with the raw amino-acid sequence, 359 residues long: Glycerol-3-phosphate dehydrogenase [NAD(P)+] (359 aa).

NADPH-binding residues include Thr-11, Trp-12, Arg-32, and Lys-107. 2 residues coordinate sn-glycerol 3-phosphate: Lys-107 and Gly-138. Residue Ala-142 participates in NADPH binding. Positions 193, 246, 256, 257, and 258 each coordinate sn-glycerol 3-phosphate. Lys-193 (proton acceptor) is an active-site residue. Arg-257 provides a ligand contact to NADPH. 2 residues coordinate NADPH: Val-281 and Glu-283.

Belongs to the NAD-dependent glycerol-3-phosphate dehydrogenase family.

It is found in the cytoplasm. The catalysed reaction is sn-glycerol 3-phosphate + NAD(+) = dihydroxyacetone phosphate + NADH + H(+). It carries out the reaction sn-glycerol 3-phosphate + NADP(+) = dihydroxyacetone phosphate + NADPH + H(+). The protein operates within membrane lipid metabolism; glycerophospholipid metabolism. Catalyzes the reduction of the glycolytic intermediate dihydroxyacetone phosphate (DHAP) to sn-glycerol 3-phosphate (G3P), the key precursor for phospholipid synthesis. This is Glycerol-3-phosphate dehydrogenase [NAD(P)+] from Dehalococcoides mccartyi (strain CBDB1).